We begin with the raw amino-acid sequence, 130 residues long: Small ribosomal subunit protein uS9 (130 aa).

The protein belongs to the universal ribosomal protein uS9 family.

The chain is Small ribosomal subunit protein uS9 from Streptococcus pyogenes serotype M1.